Reading from the N-terminus, the 289-residue chain is 33 kDa chaperonin (289 aa).

2 cysteine pairs are disulfide-bonded: cysteine 230–cysteine 232 and cysteine 263–cysteine 266.

Belongs to the HSP33 family. Post-translationally, under oxidizing conditions two disulfide bonds are formed involving the reactive cysteines. Under reducing conditions zinc is bound to the reactive cysteines and the protein is inactive.

The protein resides in the cytoplasm. Its function is as follows. Redox regulated molecular chaperone. Protects both thermally unfolding and oxidatively damaged proteins from irreversible aggregation. Plays an important role in the bacterial defense system toward oxidative stress. This is 33 kDa chaperonin from Shigella flexneri serotype 5b (strain 8401).